A 763-amino-acid polypeptide reads, in one-letter code: MNQKTTLVLLALAVITIFALVCVLIAGRGGDGGEASQPHYCPSGTPSVQPWTHPGQNQLFADLSREELTAVMSFLTQKLGPDLVDAAQARPSDNCIFSVELQLPPKAAALAHLDRRSPPPAREALAIVFFGGQPQPNVTELVVGPLPQPSYMRDVTVERHGGPLPYYRRPVLLREYLDIDQMIFNRELPQAAGVLHHCCSYKQGGGNLVTMTTAPRGLQSGDRATWFGLYYNISGAGYYLHPVGLELLVDHKALDPAQWTIQKVFFQGRYYESLAQLEEQFEAGRVNVVVIPNNGTGGSWSLKSQVPPGPTPPLQFHPQGTRFSVQGSRVTSSLWTFSFGLGAFSGPRIFDIRFQGERLAYEISLQEAVAIYGGNTPAAMLTRYMDGCFGMGKFATPLTRGVDCPYLATYVDWHFLLESQAPRTLHDAFCVFEQNKGLPLRRHHSDFISQYFGGVVETVLVFRSVSTLLNYDYVWDMVFHPNGAIEVKFHATGYISSAFFFGTAQKYGNQVRENTLGTVHTHSAHYKVDLDVGGLENWVWAEDMAFVPTTVPWSPEHQIQRLQVTRKQLETEEQAAFPLGGASPRYLYLASKQSNKWGHPRGYRIQTVSFAGRPLPQNSSTERAISWGRYQLAVTQRKETEPSSSSVFNQNDPWTPTVDFADFINNETIAGKDLVAWVTAGFLHIPHAEDIPNTVTVGNGVGFFLRPYNFFDEDPSINSADSIYFQKHQDAGSCEVNSLACLPKDPACAPDLPAFSHGGFFTN.

Residues 1–6 (MNQKTT) lie on the Cytoplasmic side of the membrane. Residues 7–27 (LVLLALAVITIFALVCVLIAG) form a helical; Signal-anchor for type II membrane protein membrane-spanning segment. The Extracellular portion of the chain corresponds to 28–763 (RGGDGGEASQ…AFSHGGFFTN (736 aa)). An N-linked (GlcNAc...) asparagine glycan is attached at asparagine 137. A disulfide bridge links cysteine 198 with cysteine 199. Asparagine 232 and asparagine 294 each carry an N-linked (GlcNAc...) asparagine glycan. Residue aspartate 386 is the Proton acceptor of the active site. The cysteines at positions 404 and 430 are disulfide-linked. The active-site Schiff-base intermediate with substrate; via topaquinone is the tyrosine 471. A 2',4',5'-topaquinone modification is found at tyrosine 471. Cu(2+) is bound by residues histidine 520 and histidine 522. Ca(2+) is bound by residues aspartate 529, leucine 530, aspartate 531, and glutamate 572. The N-linked (GlcNAc...) asparagine glycan is linked to asparagine 618. 3 residues coordinate Ca(2+): glutamate 641, phenylalanine 663, and asparagine 665. Asparagine 666 is a glycosylation site (N-linked (GlcNAc...) asparagine). 3 residues coordinate Ca(2+): glutamate 667, aspartate 673, and leucine 674. Histidine 684 is a binding site for Cu(2+). Cysteine 734 and cysteine 741 are oxidised to a cystine.

Belongs to the copper/topaquinone oxidase family. As to quaternary structure, homodimer; disulfide-linked. Probably forms heterodimers with AOC2. Cu(2+) is required as a cofactor. Requires Ca(2+) as cofactor. L-topaquinone serves as cofactor. Post-translationally, topaquinone (TPQ) is generated by copper-dependent autoxidation of a specific tyrosyl residue. In terms of processing, N- and O-glycosylated.

It localises to the cell membrane. The enzyme catalyses methylamine + O2 + H2O = formaldehyde + H2O2 + NH4(+). It carries out the reaction benzylamine + O2 + H2O = benzaldehyde + H2O2 + NH4(+). It catalyses the reaction 2-phenylethylamine + O2 + H2O = 2-phenylacetaldehyde + H2O2 + NH4(+). Functionally, catalyzes the oxidative deamination of primary amines to the corresponding aldehydes with the concomitant production of hydrogen peroxide and ammonia. Has a preference for the primary monoamines methylamine and benzylamine. Could also act on 2-phenylethylamine but much less efficiently. At endothelial cells surface can also function as a cell adhesion protein that participates in lymphocyte extravasation and recirculation by mediating the binding of lymphocytes to peripheral lymph node vascular endothelial cells in an L-selectin-independent fashion. This Bos taurus (Bovine) protein is Amine oxidase [copper-containing] 3.